A 356-amino-acid chain; its full sequence is Heat-inducible transcription repressor HrcA (356 aa).

Belongs to the HrcA family.

Functionally, negative regulator of class I heat shock genes (grpE-dnaK-dnaJ and groELS operons). Prevents heat-shock induction of these operons. The polypeptide is Heat-inducible transcription repressor HrcA (Gluconobacter oxydans (strain 621H) (Gluconobacter suboxydans)).